The primary structure comprises 310 residues: tRNA-cytidine(32) 2-sulfurtransferase (310 aa).

Residues 47–52 (SGGKDS) carry the PP-loop motif motif. [4Fe-4S] cluster is bound by residues Cys-122, Cys-125, and Cys-213.

This sequence belongs to the TtcA family. In terms of assembly, homodimer. It depends on Mg(2+) as a cofactor. [4Fe-4S] cluster is required as a cofactor.

It is found in the cytoplasm. The catalysed reaction is cytidine(32) in tRNA + S-sulfanyl-L-cysteinyl-[cysteine desulfurase] + AH2 + ATP = 2-thiocytidine(32) in tRNA + L-cysteinyl-[cysteine desulfurase] + A + AMP + diphosphate + H(+). It participates in tRNA modification. Functionally, catalyzes the ATP-dependent 2-thiolation of cytidine in position 32 of tRNA, to form 2-thiocytidine (s(2)C32). The sulfur atoms are provided by the cysteine/cysteine desulfurase (IscS) system. This Cronobacter sakazakii (strain ATCC BAA-894) (Enterobacter sakazakii) protein is tRNA-cytidine(32) 2-sulfurtransferase.